The following is a 297-amino-acid chain: Heme A synthase (297 aa).

The Cytoplasmic segment spans residues 1-6 (MNRKLS). Residues 7–27 (IFSAFVTFTMMIVLLMGGTVT) traverse the membrane as a helical segment. Over 28 to 62 (KTDSGNGCGTDWPLCHGELIPTNPSVETMIEYSHR) the chain is Extracellular. A disulfide bond links C35 and C42. The active site involves E58. A heme o-binding site is contributed by H61. A helical transmembrane segment spans residues 63–83 (AVTGVVGLLIIALCLWTLVAF). The Cytoplasmic portion of the chain corresponds to 84-90 (KDRLDIK). A helical transmembrane segment spans residues 91–111 (IFAFLAFIFMLIQSIVGAGAV). Topologically, residues 112–121 (VWQQSDLVMA) are extracellular. Residues 122–142 (LHFGISLISFASLLILTILIM) traverse the membrane as a helical segment. A heme o-binding site is contributed by H123. Topologically, residues 143 to 160 (ERSGQEFRESVPAFLRKL) are cytoplasmic. A helical membrane pass occupies residues 161–181 (LYGLLIYTLIVVYTGAFVRHV). The Extracellular portion of the chain corresponds to 182-201 (GATYACVGWPVCSQPTMTFE). A disulfide bridge links C187 with C193. Residues 202-222 (AWVQMIHRILAGLLFFYTLFV) traverse the membrane as a helical segment. Heme b is bound at residue H208. Residues 223–236 (HYTAIRLKHRTSRT) are Cytoplasmic-facing. A helical transmembrane segment spans residues 237–257 (GMLFATFFISCQVATGAWIVL). Residues 258–262 (GGHAT) are Extracellular-facing. Residues 263-283 (YVPLLHAFLITCYFGVISYLA) form a helical membrane-spanning segment. H268 is a binding site for heme b. Over 284 to 297 (YHAFRTRKKDSRLR) the chain is Cytoplasmic.

It belongs to the COX15/CtaA family. Type 1 subfamily. Interacts with CtaB. Heme b is required as a cofactor.

The protein localises to the cell membrane. It carries out the reaction Fe(II)-heme o + 2 A + H2O = Fe(II)-heme a + 2 AH2. It participates in porphyrin-containing compound metabolism; heme A biosynthesis; heme A from heme O: step 1/1. Its function is as follows. Catalyzes the conversion of heme O to heme A by two successive hydroxylations of the methyl group at C8. The first hydroxylation forms heme I, the second hydroxylation results in an unstable dihydroxymethyl group, which spontaneously dehydrates, resulting in the formyl group of heme A. In Exiguobacterium sibiricum (strain DSM 17290 / CCUG 55495 / CIP 109462 / JCM 13490 / 255-15), this protein is Heme A synthase.